The following is a 580-amino-acid chain: MSGDYSATRKSENVDTSTTASQEDSSLAPEQPEKLVGASDVAAVSNNEPTADEYPHGLRLITLVLAINLAMFLASLDQTILGTAIPKITDEFHGLSQVSWYGSAYFMCLGGFQSTWGKVYKYFPLKISFAIAVFVFELGSLICGVARNSNTFIVGRAIAGIGGAGITSGSTVILAFSAEPAKRPTLMSTMGVTYCIAFILGPLIGGAFSEKVTWRWCFYINLPIGGLAMALFFLFFRTPSVSTTQDATLKEKLLHMDPVGTVLAMGGIISFILALQYAGVSHAWNSSVVIGLLVGFVLIMVTLAAWEYFQGDYAMLPYRLFKRRVMWAGGIFQFFFVGCYFLLLFYLPIYFQSIKGVSAIHSGVDNLPLVLSACLFIILGGAAVEKTHMATPYMTAGSAVAAVATGLLYTLDVDTSSGKWIGYQVLVGAGLAFPFQNALNILQAEVDADDMSPATSSLYFFQILGGAFSISAAQAAFNNRLLHSLTINAPGVSPLLVLATGASDLRSVFSADELPGVILSYMDGLKAAFAVSVGLVGMAFLSSLHMVMIDSCETLHTTGDDGAWKGKEVKELEVERLYVN.

A disordered region spans residues 1 to 33 (MSGDYSATRKSENVDTSTTASQEDSSLAPEQPE). The span at 14-25 (VDTSTTASQEDS) shows a compositional bias: polar residues. A run of 7 helical transmembrane segments spans residues 60–80 (LITL…DQTI), 92–112 (FHGL…LGGF), 125–145 (LKIS…ICGV), 157–177 (AIAG…LAFS), 188–208 (STMG…GGAF), 216–236 (WCFY…FLFF), and 259–279 (VGTV…QYAG). An N-linked (GlcNAc...) asparagine glycan is attached at Asn-285. Helical transmembrane passes span 286–306 (SSVV…LAAW), 331–351 (IFQF…PIYF), 364–384 (VDNL…GAAV), 389–409 (MATP…GLLY), 421–441 (IGYQ…ALNI), 457–477 (SLYF…QAAF), and 529–549 (FAVS…MVMI).

The protein belongs to the major facilitator superfamily.

Its subcellular location is the membrane. MFS-type transporter; part of the gene cluster that produces the tetronate natural products trihazones. This is MFS-type transporter thnB from Trichoderma harzianum (Hypocrea lixii).